The following is a 401-amino-acid chain: Enoyl-[acyl-carrier-protein] reductase [NADH] (401 aa).

Residues 48–53, 74–75, 111–112, and 140–141 contribute to the NAD(+) site; these read GASSGY, FE, DA, and LA. Substrate is bound at residue tyrosine 226. Residue tyrosine 236 is the Proton donor of the active site. NAD(+) contacts are provided by residues lysine 245 and 274–276; that span reads VVT.

It belongs to the TER reductase family. In terms of assembly, monomer.

The catalysed reaction is a 2,3-saturated acyl-[ACP] + NAD(+) = a (2E)-enoyl-[ACP] + NADH + H(+). The protein operates within lipid metabolism; fatty acid biosynthesis. Its function is as follows. Involved in the final reduction of the elongation cycle of fatty acid synthesis (FAS II). Catalyzes the reduction of a carbon-carbon double bond in an enoyl moiety that is covalently linked to an acyl carrier protein (ACP). This chain is Enoyl-[acyl-carrier-protein] reductase [NADH], found in Xylella fastidiosa (strain 9a5c).